The following is a 249-amino-acid chain: Ubiquinone/menaquinone biosynthesis C-methyltransferase UbiE (249 aa).

Residues Thr72, Asp93, and 121–122 contribute to the S-adenosyl-L-methionine site; that span reads NA.

Belongs to the class I-like SAM-binding methyltransferase superfamily. MenG/UbiE family.

The enzyme catalyses a 2-demethylmenaquinol + S-adenosyl-L-methionine = a menaquinol + S-adenosyl-L-homocysteine + H(+). The catalysed reaction is a 2-methoxy-6-(all-trans-polyprenyl)benzene-1,4-diol + S-adenosyl-L-methionine = a 5-methoxy-2-methyl-3-(all-trans-polyprenyl)benzene-1,4-diol + S-adenosyl-L-homocysteine + H(+). It functions in the pathway quinol/quinone metabolism; menaquinone biosynthesis; menaquinol from 1,4-dihydroxy-2-naphthoate: step 2/2. The protein operates within cofactor biosynthesis; ubiquinone biosynthesis. In terms of biological role, methyltransferase required for the conversion of demethylmenaquinol (DMKH2) to menaquinol (MKH2) and the conversion of 2-polyprenyl-6-methoxy-1,4-benzoquinol (DDMQH2) to 2-polyprenyl-3-methyl-6-methoxy-1,4-benzoquinol (DMQH2). The sequence is that of Ubiquinone/menaquinone biosynthesis C-methyltransferase UbiE from Hahella chejuensis (strain KCTC 2396).